A 511-amino-acid polypeptide reads, in one-letter code: Mesoderm induction early response protein 1 (511 aa).

Positions 1 to 16 are enriched in low complexity; it reads MAEPSVESSSPGGSAT. Residues 1 to 171 are disordered; that stretch reads MAEPSVESSS…EEESEEDEDY (171 aa). The residue at position 10 (S10) is a Phosphoserine. Positions 17–36 are enriched in basic and acidic residues; the sequence is SEDHEFDPSADMLVHDFDDE. Acidic residues predominate over residues 37–46; the sequence is RTLEEEEMME. A compositionally biased stretch (basic and acidic residues) spans 57-66; that stretch reads DLAREGDMPI. Over residues 83–104 the composition is skewed to acidic residues; sequence EEEEEEEEEEEGEDDEDADNDD. Positions 128–143 are enriched in polar residues; sequence QSSNDDPSQSVTSQDA. S140 carries the phosphoserine modification. Y154 carries the phosphotyrosine modification. S159 and S165 each carry phosphoserine. A compositionally biased stretch (acidic residues) spans 159–171; sequence SEIEEESEEDEDY. The 99-residue stretch at 179–277 folds into the ELM2 domain; it reads KEIMVGSMFQ…EALRRLRFNV (99 aa). K238 is covalently cross-linked (Glycyl lysine isopeptide (Lys-Gly) (interchain with G-Cter in SUMO2)). One can recognise an SANT domain in the interval 282 to 334; sequence EELSVWTEEECRNFEQGLKAYGKDFHLIQANKVRTRSVGECVAFYYMWKKSER. A disordered region spans residues 365-511; sequence ESESAASSRA…KFEEHENTND (147 aa). Phosphoserine is present on residues S366, S368, and S376. The segment covering 397–408 has biased composition (polar residues); the sequence is SSRNQNGVSSNG. Composition is skewed to basic and acidic residues over residues 413-422 and 461-474; these read LNKEEVKVEG and ARNE…NERP. Residue K419 forms a Glycyl lysine isopeptide (Lys-Gly) (interchain with G-Cter in SUMO2) linkage. Polar residues predominate over residues 481-493; it reads NSSGKESPGSSEF. A phosphoserine mark is found at S482, S487, and S490. Residues 499–511 show a composition bias toward basic and acidic residues; the sequence is SHGKFEEHENTND.

As to quaternary structure, interacts with HDAC1. Part of a complex containing at least CDYL, MIER1, MIER2, HDAC1 and HDAC2. In terms of tissue distribution, ubiquitously expressed. Isoform 1 is only expressed in testis.

The protein localises to the nucleus. Its function is as follows. Transcriptional repressor regulating the expression of a number of genes including SP1 target genes. Probably functions through recruitment of HDAC1 a histone deacetylase involved in chromatin silencing. This Mus musculus (Mouse) protein is Mesoderm induction early response protein 1 (Mier1).